The chain runs to 541 residues: Protein yellow (541 aa).

The first 21 residues, 1–21, serve as a signal peptide directing secretion; it reads MFQDKGWILVTLITLVTPSWA. N-linked (GlcNAc...) asparagine glycosylation is found at Asn144 and Asn215. Residues 443–463 are disordered; the sequence is QKPQTSWASSPPPPSRTYLPA.

This sequence belongs to the major royal jelly protein family.

It is found in the secreted. Controls the pigmentation pattern of the adult cuticle and larval mouth parts. This Drosophila mauritiana (Fruit fly) protein is Protein yellow (y).